Consider the following 145-residue polypeptide: Histone H2B.1, sperm (145 aa).

The tract at residues 1-52 is disordered; the sequence is MPSQKSPTKRSPTKRSPTKRSPQKGGKGGKGAKRGGKAGKRRRGVQVKRRRR. Short sequence motifs (SPKK motif) lie at residues 6–9, 11–14, 16–19, and 21–24; these read SPTK and SPQK. Basic residues-rich tracts occupy residues 7–22 and 30–52; these read PTKR…KRSP and KGAK…RRRR. Phosphoserine is present on residues S16 and S21. O-linked (GlcNAc) serine glycosylation is present at S132. K140 is covalently cross-linked (Glycyl lysine isopeptide (Lys-Gly) (interchain with G-Cter in ubiquitin)).

It belongs to the histone H2B family. The nucleosome is a histone octamer containing two molecules each of H2A, H2B, H3 and H4 assembled in one H3-H4 heterotetramer and two H2A-H2B heterodimers. The octamer wraps approximately 147 bp of DNA. Monoubiquitination of Lys-140 gives a specific tag for epigenetic transcriptional activation and is also prerequisite for histone H3 'Lys-4' and 'Lys-79' methylation. Post-translationally, phosphorylated on SPKK motifs 3 and 4; which may regulate DNA binding. Dephosphorylated during maturation of spermatids to mature sperm and rephosphorylated at fertilization. In terms of processing, glcNAcylation at Ser-132 promotes monoubiquitination of Lys-140. It fluctuates in response to extracellular glucose, and associates with transcribed genes.

Its subcellular location is the nucleus. It localises to the chromosome. Core component of nucleosome. Nucleosomes wrap and compact DNA into chromatin, limiting DNA accessibility to the cellular machineries which require DNA as a template. Histones thereby play a central role in transcription regulation, DNA repair, DNA replication and chromosomal stability. DNA accessibility is regulated via a complex set of post-translational modifications of histones, also called histone code, and nucleosome remodeling. This Parechinus angulosus (Angulate sea urchin) protein is Histone H2B.1, sperm.